A 1308-amino-acid chain; its full sequence is Misshapen-like kinase 1 (1308 aa).

In terms of domain architecture, Protein kinase spans 25 to 289; the sequence is FELVEVVGNG…TEQLLKFPFI (265 aa). Residues 31 to 39 and K54 contribute to the ATP site; that span reads VGNGTYGQV. D153 acts as the Proton acceptor in catalysis. 3 disordered regions span residues 299–347, 363–383, and 395–862; these read RIQL…NVPG, KSNSEALKQQQQLQQQQQRDP, and QRRI…GGTM. Positions 317–333 are enriched in acidic residues; it reads EETEYEYSGSEEEDDSH. A phosphoserine mark is found at S324 and S326. The segment covering 371–380 has biased composition (low complexity); the sequence is QQQQLQQQQQ. A compositionally biased stretch (basic and acidic residues) spans 396-466; sequence RRIEEQKEER…EEQRQSERLQ (71 aa). Positions 479–497 are enriched in low complexity; that stretch reads LQQQQQQQQLQKQQQQQQQ. An omega-N-methylarginine mark is found at R503 and R511. The span at 520 to 530 shows a compositional bias: basic and acidic residues; that stretch reads AWAREVEERAR. A compositionally biased stretch (polar residues) spans 600 to 610; it reads RSQSLQDQPTR. The segment covering 623-633 has biased composition (low complexity); that stretch reads PAAVPTPTATP. Phosphoserine is present on S644. Polar residues predominate over residues 673 to 685; sequence QRTSSIATALNTS. Phosphoserine is present on residues D702, S720, S729, S745, S746, and S750. Over residues 702–714 the composition is skewed to basic and acidic residues; that stretch reads DLRRSDPGWERSD. The segment covering 773–797 has biased composition (basic and acidic residues); it reads AIGEDFVLLKERTLDEAPKPPKKAM. Positions 804 to 820 are enriched in acidic residues; that stretch reads EEVESSEEEEEEGDGEP. Positions 842–1308 are mediates interaction with RAP2A; that stretch reads MVVHDVEEIS…TLNRNCIMNW (467 aa). T867 is modified (phosphothreonine). The segment at 881–918 is disordered; sequence GYTNLPDVVQPSHSPTENSKGQSPPTKDGGSDYQSRGL. A compositionally biased stretch (polar residues) spans 891 to 905; the sequence is PSHSPTENSKGQSPP. One can recognise a CNH domain in the interval 995–1282; it reads NSEILCAALW…KFLCERNDKV (288 aa).

Belongs to the protein kinase superfamily. STE Ser/Thr protein kinase family. STE20 subfamily. In terms of assembly, interacts with RAP2A and TANC1. Interacts with NCK1. Mg(2+) is required as a cofactor. Autophosphorylated. In terms of tissue distribution, appears to be ubiquitous, expressed in all tissue types examined. Highly expressed in the brain, moderately expressed in kidney and spleen, low levels present in heart and skeletal muscle. Isoform 2 is more abundant in the brain than isoform 1.

The protein resides in the cytoplasm. Its subcellular location is the postsynaptic density. It is found in the cell projection. It localises to the axon. The protein localises to the dendrite. It catalyses the reaction L-seryl-[protein] + ATP = O-phospho-L-seryl-[protein] + ADP + H(+). The enzyme catalyses L-threonyl-[protein] + ATP = O-phospho-L-threonyl-[protein] + ADP + H(+). Serine/threonine kinase which acts as a negative regulator of Ras-related Rap2-mediated signal transduction to control neuronal structure and AMPA receptor trafficking. Required for normal synaptic density, dendrite complexity, as well as surface AMPA receptor expression in hippocampal neurons. Can activate the JNK and MAPK14/p38 pathways and mediates stimulation of the stress-activated protein kinase MAPK14/p38 MAPK downstream of the Raf/ERK pathway. Phosphorylates TANC1 upon stimulation by RAP2A, MBP and SMAD1. Has an essential function in negative selection of thymocytes, perhaps by coupling NCK1 to activation of JNK1. Activator of the Hippo signaling pathway which plays a pivotal role in organ size control and tumor suppression by restricting proliferation and promoting apoptosis. MAP4Ks act in parallel to and are partially redundant with STK3/MST2 and STK4/MST2 in the phosphorylation and activation of LATS1/2, and establish MAP4Ks as components of the expanded Hippo pathway. This Mus musculus (Mouse) protein is Misshapen-like kinase 1.